A 639-amino-acid chain; its full sequence is uncharacterized protein (639 aa).

This is an uncharacterized protein from Mus musculus (Mouse).